A 223-amino-acid polypeptide reads, in one-letter code: von Willebrand factor C domain-containing protein 2-like (223 aa).

The N-terminal stretch at 1–21 is a signal peptide; it reads MGPFLPAICVVLLALNAAVSP. 2 VWFC domains span residues 51–110 and 114–172; these read KGCV…PECK and NFCE…PICK.

Its subcellular location is the secreted. The protein localises to the synapse. In terms of biological role, may play a role in bone differentiation and matrix mineralization. May play a role in neural development. This chain is von Willebrand factor C domain-containing protein 2-like (vwc2l), found in Danio rerio (Zebrafish).